The following is a 284-amino-acid chain: MDSYYKNKKKINFSKMHGLKNDFMVINCIKKNVFLTSHIIKKLSNRYTGIGFDQLLLVEKSNSLLTDFHYRIFNANGNEVEQCGNGARCFGLFLLLKGLTNKKKILISTKKKPLTIEFLTENMIKVNMNEPDFKFYNLSSLQNVLDNNFSIKLINENLICNLVSIGNPHCIIKVQSIKNAPVNIIGDNIEKNPIFPEGVNVSFMEILNKKHIKLRVYERNVGETKACGSAACAAVAVGIAQKLLSDTVHVELLGGKLIIIWKGFGTPLYMVGPAKHVYDGYIYI.

Substrate-binding residues include Asn-21, Gln-54, and Asn-74. Residue Cys-83 is the Proton donor of the active site. Substrate is bound by residues 84 to 85 (GN), Asn-167, Asn-200, and 218 to 219 (ER). Cys-227 functions as the Proton acceptor in the catalytic mechanism. 228 to 229 (GS) is a binding site for substrate.

The protein belongs to the diaminopimelate epimerase family. As to quaternary structure, homodimer.

The protein localises to the cytoplasm. It carries out the reaction (2S,6S)-2,6-diaminopimelate = meso-2,6-diaminopimelate. It functions in the pathway amino-acid biosynthesis; L-lysine biosynthesis via DAP pathway; DL-2,6-diaminopimelate from LL-2,6-diaminopimelate: step 1/1. Its function is as follows. Catalyzes the stereoinversion of LL-2,6-diaminopimelate (L,L-DAP) to meso-diaminopimelate (meso-DAP), a precursor of L-lysine and an essential component of the bacterial peptidoglycan. In Buchnera aphidicola subsp. Acyrthosiphon pisum (strain 5A), this protein is Diaminopimelate epimerase.